A 348-amino-acid chain; its full sequence is Holliday junction branch migration complex subunit RuvB (348 aa).

The interval 1–183 (MTEASRIVAP…FGIPVRLNFY (183 aa)) is large ATPase domain (RuvB-L). ATP-binding positions include L22, R23, G64, K67, T68, T69, 130–132 (EDF), R173, Y183, and R220. Residue T68 coordinates Mg(2+). The interval 184–254 (TEDELEKIVS…VADHALGALE (71 aa)) is small ATPAse domain (RuvB-S). Residues 257-348 (AAGLDAMDRR…SGLFGQDEDR (92 aa)) are head domain (RuvB-H). 3 residues coordinate DNA: R293, R312, and R317. The disordered stretch occupies residues 329 to 348 (LTEPSRDPAQSGLFGQDEDR).

Belongs to the RuvB family. As to quaternary structure, homohexamer. Forms an RuvA(8)-RuvB(12)-Holliday junction (HJ) complex. HJ DNA is sandwiched between 2 RuvA tetramers; dsDNA enters through RuvA and exits via RuvB. An RuvB hexamer assembles on each DNA strand where it exits the tetramer. Each RuvB hexamer is contacted by two RuvA subunits (via domain III) on 2 adjacent RuvB subunits; this complex drives branch migration. In the full resolvosome a probable DNA-RuvA(4)-RuvB(12)-RuvC(2) complex forms which resolves the HJ.

It is found in the cytoplasm. It catalyses the reaction ATP + H2O = ADP + phosphate + H(+). The RuvA-RuvB-RuvC complex processes Holliday junction (HJ) DNA during genetic recombination and DNA repair, while the RuvA-RuvB complex plays an important role in the rescue of blocked DNA replication forks via replication fork reversal (RFR). RuvA specifically binds to HJ cruciform DNA, conferring on it an open structure. The RuvB hexamer acts as an ATP-dependent pump, pulling dsDNA into and through the RuvAB complex. RuvB forms 2 homohexamers on either side of HJ DNA bound by 1 or 2 RuvA tetramers; 4 subunits per hexamer contact DNA at a time. Coordinated motions by a converter formed by DNA-disengaged RuvB subunits stimulates ATP hydrolysis and nucleotide exchange. Immobilization of the converter enables RuvB to convert the ATP-contained energy into a lever motion, pulling 2 nucleotides of DNA out of the RuvA tetramer per ATP hydrolyzed, thus driving DNA branch migration. The RuvB motors rotate together with the DNA substrate, which together with the progressing nucleotide cycle form the mechanistic basis for DNA recombination by continuous HJ branch migration. Branch migration allows RuvC to scan DNA until it finds its consensus sequence, where it cleaves and resolves cruciform DNA. In Nitrobacter winogradskyi (strain ATCC 25391 / DSM 10237 / CIP 104748 / NCIMB 11846 / Nb-255), this protein is Holliday junction branch migration complex subunit RuvB.